A 129-amino-acid polypeptide reads, in one-letter code: Small ribosomal subunit protein uS9 (129 aa).

The interval Leu-97–Arg-129 is disordered. Over residues Lys-110 to Arg-129 the composition is skewed to basic residues.

This sequence belongs to the universal ribosomal protein uS9 family.

In Chlamydia trachomatis serovar A (strain ATCC VR-571B / DSM 19440 / HAR-13), this protein is Small ribosomal subunit protein uS9.